An 868-amino-acid chain; its full sequence is Hopanoid transporter HpnN (868 aa).

12 helical membrane passes run 16-36 (FAAF…FYTY), 273-293 (GAVV…WMAL), 298-318 (IIFA…AVGL), 326-346 (LLSI…GIQF), 370-390 (YSAV…LSFL), 403-423 (IAGA…PALL), 452-472 (IAII…LYFM), 710-730 (IVAS…ILLW), 740-760 (ALTL…CVLI), 762-782 (LPLN…GVAF), 805-825 (AIFF…LSSH), and 834-854 (LLAL…PALM). An SSD domain is found at 299–425 (IFAVAANLVI…ITVLPALLKL (127 aa)).

It belongs to the resistance-nodulation-cell division (RND) (TC 2.A.6) family. MmpL subfamily.

The protein resides in the cell inner membrane. Its function is as follows. Essential for hopanoid transport from the cytoplasmic to the outer membrane. Required for the C(35) hopanoid, bacteriohopanetetrol, to remain localized to the mother cell type. This is Hopanoid transporter HpnN from Rhodopseudomonas palustris (strain TIE-1).